Reading from the N-terminus, the 346-residue chain is MKFIGAVYLLFLLPALSFNSSYEGLEKKLKEVFTERTGILRHLSKTSKELDSIKGNLQSLKNEDAVPKKDVQRILELSHKQRDEMKSLQAALQKQLDDAAERAEKQQATIKFLKMEMEKKTKIIKDLQQENKSLKNKLLSGNKLCDIHAEESKKIQAQLKELRYGKKDLIFKGQQLMDLENKLKVAKDELEKAALDKESQLKALKDTVHICFSSVLHSQTASLHRFPATPTNLLRYSALVNNSRVTFQQPHMKDIPKVPRITTTSKLPVSSAVMRRESTGPKDCQMVKVGSDCSHNQTESSSVMKKTFGHSQSKTPEQNGQGQARTAEESVKTDGELKKTQSDKHN.

The first 17 residues, 1-17 (MKFIGAVYLLFLLPALS), serve as a signal peptide directing secretion. N-linked (GlcNAc...) asparagine glycans are attached at residues asparagine 19 and asparagine 131. The stretch at 41 to 209 (RHLSKTSKEL…QLKALKDTVH (169 aa)) forms a coiled coil. Residues 162–190 (LRYGKKDLIFKGQQLMDLENKLKVAKDEL) form a leucine-zipper region. 2 N-linked (GlcNAc...) asparagine glycosylation sites follow: asparagine 241 and asparagine 296. Residues 271-346 (SAVMRRESTG…LKKTQSDKHN (76 aa)) are disordered. Polar residues predominate over residues 293–324 (CSHNQTESSSVMKKTFGHSQSKTPEQNGQGQA). Residues 326 to 346 (TAEESVKTDGELKKTQSDKHN) are compositionally biased toward basic and acidic residues.

Its subcellular location is the secreted. The chain is Leucine zipper protein 2 (luzp2) from Danio rerio (Zebrafish).